Consider the following 320-residue polypeptide: o-succinylbenzoate synthase (320 aa).

The Proton donor role is filled by K133. Mg(2+) contacts are provided by D161, E190, and D213. K235 functions as the Proton acceptor in the catalytic mechanism.

This sequence belongs to the mandelate racemase/muconate lactonizing enzyme family. MenC type 1 subfamily. The cofactor is a divalent metal cation.

It carries out the reaction (1R,6R)-6-hydroxy-2-succinyl-cyclohexa-2,4-diene-1-carboxylate = 2-succinylbenzoate + H2O. The protein operates within quinol/quinone metabolism; 1,4-dihydroxy-2-naphthoate biosynthesis; 1,4-dihydroxy-2-naphthoate from chorismate: step 4/7. It functions in the pathway quinol/quinone metabolism; menaquinone biosynthesis. Functionally, converts 2-succinyl-6-hydroxy-2,4-cyclohexadiene-1-carboxylate (SHCHC) to 2-succinylbenzoate (OSB). The sequence is that of o-succinylbenzoate synthase from Escherichia coli O9:H4 (strain HS).